The sequence spans 85 residues: Toxin BmKAEP (85 aa).

An N-terminal signal peptide occupies residues 1–21 (MKLFLLLVISASMLIDGLVNA). The LCN-type CS-alpha/beta domain occupies 22–82 (DGYIRGSNGC…TWKSESNTCG (61 aa)). 4 disulfides stabilise this stretch: cysteine 31–cysteine 81, cysteine 35–cysteine 56, cysteine 42–cysteine 63, and cysteine 46–cysteine 65. Glycine 82 is modified (glycine amide).

In terms of tissue distribution, expressed by the venom gland.

Its subcellular location is the secreted. Functionally, shows anti-epileptic activity. Shares high homology with depressant insect toxins, but shows very weak toxicity against mammals and insects and no obvious symptoms on insect larvae. May target voltage-gated sodium channel (Nav). The polypeptide is Toxin BmKAEP (Olivierus martensii (Manchurian scorpion)).